The following is a 382-amino-acid chain: Lipid-A-disaccharide synthase (382 aa).

It belongs to the LpxB family.

The catalysed reaction is 2-N,3-O-bis[(3R)-3-hydroxytetradecanoyl]-alpha-D-glucosaminyl 1-phosphate + UDP-2-N,3-O-bis[(3R)-3-hydroxytetradecanoyl]-alpha-D-glucosamine = lipid A disaccharide (E. coli) + UDP + H(+). It carries out the reaction a lipid X + a UDP-2-N,3-O-bis[(3R)-3-hydroxyacyl]-alpha-D-glucosamine = a lipid A disaccharide + UDP + H(+). It functions in the pathway glycolipid biosynthesis; lipid IV(A) biosynthesis; lipid IV(A) from (3R)-3-hydroxytetradecanoyl-[acyl-carrier-protein] and UDP-N-acetyl-alpha-D-glucosamine: step 5/6. Functionally, condensation of UDP-2,3-diacylglucosamine and 2,3-diacylglucosamine-1-phosphate to form lipid A disaccharide, a precursor of lipid A, a phosphorylated glycolipid that anchors the lipopolysaccharide to the outer membrane of the cell. The polypeptide is Lipid-A-disaccharide synthase (Salmonella paratyphi A (strain AKU_12601)).